The chain runs to 187 residues: HTH-type dhaKLM operon transcriptional activator DhaS (187 aa).

One can recognise an HTH tetR-type domain in the interval 12-72 (IITQKIIAKA…WIFENDFAEL (61 aa)). The segment at residues 35–54 (SVSDIMQTAKIRRQTFYNYF) is a DNA-binding region (H-T-H motif).

As to quaternary structure, homodimer. Interacts with a homodimer of DhaQ.

Functionally, in complex with DhaQ, upon activation by dihydroxyacetone, activates transcription of the dhaKLM operon. Binds the inverted repeat sequence 5'-GGACACATN(6)ATTTGTCC-3' located upstream of and partially overlapping with the -35 promoter sequence of the dhaKLM operon promoter. This is HTH-type dhaKLM operon transcriptional activator DhaS (dhaS) from Lactococcus lactis subsp. lactis (strain IL1403) (Streptococcus lactis).